Reading from the N-terminus, the 171-residue chain is Tetratricopeptide repeat protein 9C (171 aa).

TPR repeat units follow at residues 8–41 (AQLYKEEGNQRYREGKYRDAVSRYHRALLQLRGL), 72–107 (TDCYNNLAACLLQMEPVKYERVREYSQKVLERQPEN), and 108–141 (AKALYRAGVAFFHLQDYDQARHYLLAAVNRQPKD).

Belongs to the TTC9 family.

The polypeptide is Tetratricopeptide repeat protein 9C (Ttc9c) (Rattus norvegicus (Rat)).